A 393-amino-acid chain; its full sequence is Major outer membrane protein P.IA (393 aa).

Residues Met-1 to Ala-19 form the signal peptide.

The protein belongs to the Gram-negative porin family. As to quaternary structure, homotrimer.

The protein resides in the cell outer membrane. Functionally, serves as a slightly cation selective porin. Major antigen on the gonococcal cell surface and it may have pathogenic properties in addition to its porin activity. The sequence is that of Major outer membrane protein P.IA (porA) from Neisseria meningitidis serogroup C.